The chain runs to 26 residues: Conotoxin reg6(gamma) (26 aa).

The span at 1 to 12 (RVLEPGXEDPDV) shows a compositional bias: acidic residues. Positions 1–26 (RVLEPGXEDPDVGEPAGEYEHHLLEX) are disordered. Glutamate 4 bears the 4-carboxyglutamate mark. Proline 5 is modified (4-hydroxyproline). Position 8 is a 4-carboxyglutamate (glutamate 8). Proline 10 carries the post-translational modification 4-hydroxyproline. Residue glutamate 14 is modified to 4-carboxyglutamate. 4-hydroxyproline is present on proline 15. Residues glutamate 18, glutamate 20, and glutamate 25 each carry the 4-carboxyglutamate modification.

In terms of tissue distribution, expressed by the venom duct.

Its subcellular location is the secreted. This chain is Conotoxin reg6(gamma), found in Conus regius (Crown cone).